The sequence spans 180 residues: UPF0149 protein XC_0904 (180 aa).

The protein belongs to the UPF0149 family.

In Xanthomonas campestris pv. campestris (strain 8004), this protein is UPF0149 protein XC_0904.